The following is a 154-amino-acid chain: Ribosomal RNA large subunit methyltransferase H (154 aa).

Residues leucine 70, glycine 102, and 121 to 126 (LSRMTL) contribute to the S-adenosyl-L-methionine site.

It belongs to the RNA methyltransferase RlmH family. Homodimer.

It localises to the cytoplasm. It catalyses the reaction pseudouridine(1915) in 23S rRNA + S-adenosyl-L-methionine = N(3)-methylpseudouridine(1915) in 23S rRNA + S-adenosyl-L-homocysteine + H(+). Functionally, specifically methylates the pseudouridine at position 1915 (m3Psi1915) in 23S rRNA. The chain is Ribosomal RNA large subunit methyltransferase H from Geobacter sp. (strain M21).